The primary structure comprises 354 residues: Regulatory protein RapD (354 aa).

TPR repeat units follow at residues 64–105, 107–126, 130–163, 171–204, 211–244, and 321–353; these read FENQ…VKTA, KHAV…IHNT, ADLY…YLHQ, ITCK…TQQL, CHAY…QEFE, and IEAW…FIMR.

It belongs to the Rap family.

The protein localises to the cytoplasm. The chain is Regulatory protein RapD (rapD) from Bacillus subtilis (strain 168).